Here is an 84-residue protein sequence, read N- to C-terminus: Small ribosomal subunit protein bS20 (84 aa).

This sequence belongs to the bacterial ribosomal protein bS20 family.

Its function is as follows. Binds directly to 16S ribosomal RNA. The chain is Small ribosomal subunit protein bS20 from Lactiplantibacillus plantarum (strain ATCC BAA-793 / NCIMB 8826 / WCFS1) (Lactobacillus plantarum).